The primary structure comprises 768 residues: DNA topoisomerase 4 subunit A (768 aa).

The Topo IIA-type catalytic domain occupies 38 to 521; the sequence is LPEVSDGQKP…AGRAVLTQTA (484 aa). Y126 (O-(5'-phospho-DNA)-tyrosine intermediate) is an active-site residue.

It belongs to the type II topoisomerase GyrA/ParC subunit family. ParC type 1 subfamily. As to quaternary structure, heterotetramer composed of ParC and ParE.

It is found in the cell membrane. It carries out the reaction ATP-dependent breakage, passage and rejoining of double-stranded DNA.. Topoisomerase IV is essential for chromosome segregation. It relaxes supercoiled DNA. Performs the decatenation events required during the replication of a circular DNA molecule. The sequence is that of DNA topoisomerase 4 subunit A from Neisseria gonorrhoeae.